The sequence spans 251 residues: tRNA pseudouridine synthase A (251 aa).

Residue Asp53 is the Nucleophile of the active site. A substrate-binding site is contributed by Tyr110.

Belongs to the tRNA pseudouridine synthase TruA family. Homodimer.

It carries out the reaction uridine(38/39/40) in tRNA = pseudouridine(38/39/40) in tRNA. Functionally, formation of pseudouridine at positions 38, 39 and 40 in the anticodon stem and loop of transfer RNAs. In Mesoplasma florum (strain ATCC 33453 / NBRC 100688 / NCTC 11704 / L1) (Acholeplasma florum), this protein is tRNA pseudouridine synthase A.